The primary structure comprises 324 residues: Beta-ketoacyl-[acyl-carrier-protein] synthase III (324 aa).

Catalysis depends on residues Cys112 and His250. The interval 251–255 is ACP-binding; the sequence is QANIR. The active site involves Asn280.

It belongs to the thiolase-like superfamily. FabH family. Homodimer.

The protein resides in the cytoplasm. The catalysed reaction is malonyl-[ACP] + acetyl-CoA + H(+) = 3-oxobutanoyl-[ACP] + CO2 + CoA. Its pathway is lipid metabolism; fatty acid biosynthesis. Its function is as follows. Catalyzes the condensation reaction of fatty acid synthesis by the addition to an acyl acceptor of two carbons from malonyl-ACP. Catalyzes the first condensation reaction which initiates fatty acid synthesis and may therefore play a role in governing the total rate of fatty acid production. Possesses both acetoacetyl-ACP synthase and acetyl transacylase activities. Its substrate specificity determines the biosynthesis of branched-chain and/or straight-chain of fatty acids. This chain is Beta-ketoacyl-[acyl-carrier-protein] synthase III, found in Clostridium novyi (strain NT).